A 208-amino-acid chain; its full sequence is MLALFLGSLSLIPFLLIVCTAFLKIAMTLLITRNAIGVQQVPPNMALYGIALAATMFVMAPVAHDIQQRVHEHPLELSNADKLQSSLKVVIEPLQRFMTRNTDPDVVAHLLENTQRMWPKEMADQANKNDLLLAIPAFVLSELQAGFEIGFLIYIPFIVIDLIVSNLLLALGMQMVSPMTLSLPLKLLLFVLVSGWSRLLDSLFYSYM.

A run of 4 helical transmembrane segments spans residues 2-22 (LALF…CTAF), 46-66 (ALYG…AHDI), 149-169 (IGFL…NLLL), and 176-196 (VSPM…VSGW).

The protein belongs to the FliP/MopC/SpaP family.

The protein resides in the cell membrane. Functionally, required for the secretion of harpin. The chain is Harpin secretion protein HrpW (hrpW) from Pseudomonas syringae pv. syringae.